A 409-amino-acid polypeptide reads, in one-letter code: FBD-associated F-box protein At4g10400 (409 aa).

Residues 1-47 form the F-box domain; it reads MDRISGLPDEVLVKILSFVPTKVAVSTSILSKRWEFLWMWLTKLKFG. In terms of domain architecture, FBD spans 330–379; the sequence is SWNQPSIVPECMLSSLQKFTWFKYLGRPQDRDIAVYILKNACRLRTATIK.

The polypeptide is FBD-associated F-box protein At4g10400 (Arabidopsis thaliana (Mouse-ear cress)).